We begin with the raw amino-acid sequence, 93 residues long: Defensin 5 (93 aa).

Residues 1–19 form the signal peptide; the sequence is MKKLVLLSALVLLALQVEA. A propeptide spanning residues 20-58 is cleaved from the precursor; it reads EPTPKTDEGTKTDEQPGKEDQVVSVSIEGQGDPAFQDAV. Disulfide bonds link C64–C92, C66–C81, and C71–C91.

Belongs to the alpha-defensin family. As to expression, small intestine. Not present in heart, liver, spleen, kidney, large intestine and colon.

The protein localises to the secreted. Probably contributes to the antimicrobial barrier function of the small intestine. The protein is Defensin 5 of Rattus norvegicus (Rat).